Here is a 367-residue protein sequence, read N- to C-terminus: Tetraacyldisaccharide 4'-kinase (367 aa).

68–75 (VLGGSGKT) contributes to the ATP binding site.

This sequence belongs to the LpxK family.

It carries out the reaction a lipid A disaccharide + ATP = a lipid IVA + ADP + H(+). It participates in glycolipid biosynthesis; lipid IV(A) biosynthesis; lipid IV(A) from (3R)-3-hydroxytetradecanoyl-[acyl-carrier-protein] and UDP-N-acetyl-alpha-D-glucosamine: step 6/6. In terms of biological role, transfers the gamma-phosphate of ATP to the 4'-position of a tetraacyldisaccharide 1-phosphate intermediate (termed DS-1-P) to form tetraacyldisaccharide 1,4'-bis-phosphate (lipid IVA). The protein is Tetraacyldisaccharide 4'-kinase of Chlamydia abortus (strain DSM 27085 / S26/3) (Chlamydophila abortus).